The sequence spans 107 residues: Iron-binding protein IscA (107 aa).

Fe cation contacts are provided by cysteine 35, cysteine 99, and cysteine 101.

This sequence belongs to the HesB/IscA family. In terms of assembly, homodimer; may form tetramers and higher multimers. Requires Fe cation as cofactor.

Functionally, is able to transfer iron-sulfur clusters to apo-ferredoxin. Multiple cycles of [2Fe2S] cluster formation and transfer are observed, suggesting that IscA acts catalytically. Recruits intracellular free iron so as to provide iron for the assembly of transient iron-sulfur cluster in IscU in the presence of IscS, L-cysteine and the thioredoxin reductase system TrxA/TrxB. The chain is Iron-binding protein IscA from Yersinia enterocolitica serotype O:8 / biotype 1B (strain NCTC 13174 / 8081).